Consider the following 316-residue polypeptide: L-lactate dehydrogenase (316 aa).

34-39 (DVVEGV) lines the NAD(+) pocket. Residues arginine 89, asparagine 121, and arginine 152 each coordinate substrate. Asparagine 121 contributes to the NAD(+) binding site. The Proton acceptor role is filled by histidine 172.

Belongs to the LDH/MDH superfamily. LDH family. Homotetramer.

The enzyme catalyses (S)-lactate + NAD(+) = pyruvate + NADH + H(+). The protein operates within fermentation; pyruvate fermentation to lactate; (S)-lactate from pyruvate: step 1/1. The polypeptide is L-lactate dehydrogenase (Botryococcus braunii (Green alga)).